Here is a 961-residue protein sequence, read N- to C-terminus: MDELGIPIYKRGFPEHLLHGYEFTIDSSTKIQSVGGRHDVTKLPEMNAYDIKSEGMRTALWYNPVRNDGFVLPRVLDITLRGYDGKRAVIDSSRHKSFHTDERWVQWMMKDSMDAQPLKVGLDDQTQKIAHSLHNCVVKIDSKKADTMSYHIEPIEDSLKGCLHTRTMLWNHLVRVEMSHAAQEIAYALKPTYDIVVHAERRDRSQPFRPGDQTLINFSRGQKVQMNHNSYEKMVEGLAHLVIRGKTPELIRDEITKLDEICNRWIRSRYDPGEIKAYELCKVLSTVGRKMLDQEKEPADEANLSIRFQEAIDNKFRQHDSERLKIFEHRNQRRDEDRFYILLMIAASDTFNTRVWWSNPYPCLRGTLIASETKLGDVYSMMRLWYDWSVRPTYIPYEKSREQEKYIYGRVNLFDYVAEPGTKIIHWEYKLNQQIKDITYEQGNPCDLFPDDDEAIVTKFDDVAYGQMVNDLINGGWDQERFKMHKILKSQGNVLTIDFEKDAKLTSNEGVAMPEYFDKWIIAPMFNAKLRIKHGEIAQRRNDDPMVKRTLSPIAFAPIVLQRLTLARFYDIRPAIMGQALSRQQGQSTYDEEISKIEGYAEILQRRGIVQIPKKPCPTVTAQYTLERYALFLINILEQHIIQSTDEDVMYSHPRVDYKLEVHGENIIDISQIVIFVFDFLFERRRTVRGVYESRYMVTRIRDAQGQNRINVITEFFPTFGYHLSRVKEATIIQEIMYLNFLPLFFLVSDNIIYTHKQWSVPLFLYAHELKVIPLEVGSYNDRCSLVSYIEYMVFFPSKAFRTSKLDEVQPKIAREMLKYYINTKIFEGGINLNVVTTKQLLYETYLASICGGLSDGIVWYLPITHPNKCLVAIEVSDERVPASIRASHIKLRFPLSVKHLKGIVIIQVDEEGKFTVYSEGIVSHRVCKKNLLKYMCDIVLLKFSGHVFGNDEMLTKLLNV.

It belongs to the orbivirus VP2 family.

The protein localises to the virion. The VP2 protein is one of the two proteins (with VP5) which constitute the virus particle outer capsid. It is the major target of the host immunogenic response. Responsible for viral attachment to target host cell, probably by binding to sialic acid. This attachment induces virion internalization predominantly through clathrin-dependent endocytosis. The polypeptide is Outer capsid protein VP2 (Segment-2) (Antilocapra americana (Pronghorn)).